Reading from the N-terminus, the 381-residue chain is Odorant receptor 46a, isoform A (381 aa).

The Cytoplasmic portion of the chain corresponds to 1-37 (MSKGVEIFYKGQKAFLNILSLWPQIERRWRIIHQVNY). Residues 38 to 58 (VHVIVFWVLLFDLLLVLHVMA) form a helical membrane-spanning segment. A glycan (N-linked (GlcNAc...) asparagine) is linked at Asn-59. The Extracellular segment spans residues 59–65 (NLSYMSE). Residues 66-86 (VVKAIFILATSAGHTTKLLSI) form a helical membrane-spanning segment. The Cytoplasmic portion of the chain corresponds to 87-127 (KANNVQMEELFRRLDNEEFRPRGANEELIFAAACERSRKLR). A helical transmembrane segment spans residues 128–148 (DFYGALSFAALSMILIPQFAL). Residues 149–170 (DWSHLPLKTYNPLGENTGSPAY) are Extracellular-facing. The chain crosses the membrane as a helical span at residues 171-191 (WLLYCYQCLALSVSCITNIGF). Residues 192–255 (DSLCSSLFIF…KTVERLLCKP (64 aa)) lie on the Cytoplasmic side of the membrane. The helical transmembrane segment at 256-276 (ISVQIFCSVLVLTANFYAIAV) threads the bilayer. Topologically, residues 277 to 287 (LSDERLELFKY) are extracellular. A helical membrane pass occupies residues 288-308 (VTYQACMLIQIFILCYYAGEV). Residues 309–355 (TQRSLDLPHELYKTSWVDWDYRSRRIALLFMQRLHSTLRIRTLNPSL) lie on the Cytoplasmic side of the membrane. The helical transmembrane segment at 356–376 (GFDLMLFSSIVNCSYSYFALL) threads the bilayer. At 377-381 (KRVNS) the chain is on the extracellular side.

Belongs to the insect chemoreceptor superfamily. Heteromeric odorant receptor channel (TC 1.A.69) family. Or2a subfamily. Interacts with Orco. Complexes exist early in the endomembrane system in olfactory sensory neurons (OSNs), coupling these complexes to the conserved ciliary trafficking pathway. Isoform A is expressed in a subset of 17 olfactory receptor neurons in the maxillary palp.

It is found in the cell membrane. Odorant receptor which mediates acceptance or avoidance behavior, depending on its substrates. The odorant receptor repertoire encodes a large collection of odor stimuli that vary widely in identity, intensity, and duration. May form a complex with Orco to form odorant-sensing units, providing sensitive and prolonged odorant signaling and calcium permeability. The chain is Odorant receptor 46a, isoform A (Or46a) from Drosophila melanogaster (Fruit fly).